We begin with the raw amino-acid sequence, 486 residues long: MLNASLRQLSSLLSEKKISSTELTGEFLARIKALNPDLNAFITMDEEKSLDQARTADEMIATGQSTLLTGIPIAQKDIFCANGWLTTCGSKMLSNFISPYDATVVKQFDQVGMVNLGKTNMDEFAMGSSNETSYYGPVKNPWDRLAVPGGSSGGSACAVAARLAPAATGTDTGGSIRQPAALCGISGIKPTYGLVSRYGMIAFASSLDQAGPMARSAEDLALLLNVMVGFDERDSTSLQREKEDYTQDLEKPVSGLRIGLPKEFFAEGMSSDVSSAVEAALAEYRKLGATFVEVSLPNSKLAVPVYYVLAPAEASSNLSRFDGVRYGHRAAQYANLEDLYAKTRAEGFGDEVKRRILIGTYVLSHGYYDAYYLQAQKLRRLIAEDFKKAFEQCDLIMGPTSPTVAFNIGERCNDPIQMYLSDIYTSAASLAGLPGMSIPVGFGSKNRPVGLHIIGNYFREAQMLNAAHRYQLATNWHELTPPEMNR.

Catalysis depends on charge relay system residues lysine 76 and serine 151. Residue serine 175 is the Acyl-ester intermediate of the active site.

The protein belongs to the amidase family. GatA subfamily. In terms of assembly, heterotrimer of A, B and C subunits.

It carries out the reaction L-glutamyl-tRNA(Gln) + L-glutamine + ATP + H2O = L-glutaminyl-tRNA(Gln) + L-glutamate + ADP + phosphate + H(+). Allows the formation of correctly charged Gln-tRNA(Gln) through the transamidation of misacylated Glu-tRNA(Gln) in organisms which lack glutaminyl-tRNA synthetase. The reaction takes place in the presence of glutamine and ATP through an activated gamma-phospho-Glu-tRNA(Gln). This chain is Glutamyl-tRNA(Gln) amidotransferase subunit A, found in Nitrosomonas eutropha (strain DSM 101675 / C91 / Nm57).